The primary structure comprises 354 residues: MAFFSTQPPYMNPVIPFTGIIQGGLQNGLQITLQGTVHPFPNRIAVNFQTGFSGNDIAFHFNPRFEEGGYVVCNTKQNGKWGPEERKMQMPFQKGMPFELCFLVQRSEFKVMVNKNFFVQYSHRVPYHLVDTISVSGCLHLSFINFQNSTAAPVQPVFSTMQFSQPVQFPRMPKGRKQRTQGFQPALQAPVAQTIIHTVHSIPGQMLSTPGIPPMAYPTPAYTIPFFTSIPNGFYPSKSINISGVVLPDAKRFHINLRCGGDIAFHLNPRFNEKVVVRNTQINNSWGPEERSLPGRMPFNRGQSFSVWILCEGHCFKVAVDGQHICEYYHRLKNLPDINTLEVAGDIQLTHVQT.

Galectin domains are found at residues 17 to 147 (FTGI…INFQ) and 226 to 354 (FFTS…HVQT). A beta-D-galactoside is bound by residues Asn-47, His-60, Arg-64, Asn-74, 81–87 (WGPEERK), His-266, Arg-270, Thr-280, and 286–292 (WGPEERS).

In terms of tissue distribution, the isoform Long is expressed exclusively in the small intestine.

It localises to the cytoplasm. It is found in the nucleus. The protein resides in the secreted. In terms of biological role, binds galactosides. Has high affinity for the Forssman pentasaccharide. Ligand for HAVCR2/TIM3. Binding to HAVCR2 induces T-helper type 1 lymphocyte (Th1) death. Also stimulates bactericidal activity in infected macrophages by causing macrophage activation and IL1B secretion which restricts intracellular bacterial growth. Ligand for P4HB; the interaction retains P4HB at the cell surface of Th2 T helper cells, increasing disulfide reductase activity at the plasma membrane, altering the plasma membrane redox state and enhancing cell migration. Ligand for CD44; the interaction enhances binding of SMAD3 to the FOXP3 promoter, leading to up-regulation of FOXP3 expression and increased induced regulatory T (iTreg) cell stability and suppressive function. Promotes ability of mesenchymal stromal cells to suppress T-cell proliferation. Expands regulatory T-cells and induces cytotoxic T-cell apoptosis following virus infection. Activates ERK1/2 phosphorylation inducing cytokine (IL-6, IL-8, IL-12) and chemokine (CCL2) production in mast and dendritic cells. Inhibits degranulation and induces apoptosis of mast cells. Induces maturation and migration of dendritic cells. Inhibits natural killer (NK) cell function. Can transform NK cell phenotype from peripheral to decidual during pregnancy. Astrocyte derived galectin-9 enhances microglial TNF production. May play a role in thymocyte-epithelial interactions relevant to the biology of the thymus. May provide the molecular basis for urate flux across cell membranes, allowing urate that is formed during purine metabolism to efflux from cells and serving as an electrogenic transporter that plays an important role in renal and gastrointestinal urate excretion. Highly selective to the anion urate. The protein is Galectin-9 (Lgals9) of Rattus norvegicus (Rat).